The chain runs to 334 residues: Ketol-acid reductoisomerase (NADP(+)) (334 aa).

In terms of domain architecture, KARI N-terminal Rossmann spans 1 to 181; it reads MTTVYYDQDV…GATRAGVIET (181 aa). NADP(+)-binding positions include 25–28, Arg48, Ser52, and 82–85; these read YGSQ and DEIQ. Residue His107 is part of the active site. Gly133 is a binding site for NADP(+). Residues 182-327 enclose the KARI C-terminal knotted domain; that stretch reads TFKEETETDL…RELREMMPFI (146 aa). Asp190, Glu194, Glu226, and Glu230 together coordinate Mg(2+). Residue Ser251 participates in substrate binding.

The protein belongs to the ketol-acid reductoisomerase family. Mg(2+) serves as cofactor.

The catalysed reaction is (2R)-2,3-dihydroxy-3-methylbutanoate + NADP(+) = (2S)-2-acetolactate + NADPH + H(+). The enzyme catalyses (2R,3R)-2,3-dihydroxy-3-methylpentanoate + NADP(+) = (S)-2-ethyl-2-hydroxy-3-oxobutanoate + NADPH + H(+). Its pathway is amino-acid biosynthesis; L-isoleucine biosynthesis; L-isoleucine from 2-oxobutanoate: step 2/4. It functions in the pathway amino-acid biosynthesis; L-valine biosynthesis; L-valine from pyruvate: step 2/4. Its function is as follows. Involved in the biosynthesis of branched-chain amino acids (BCAA). Catalyzes an alkyl-migration followed by a ketol-acid reduction of (S)-2-acetolactate (S2AL) to yield (R)-2,3-dihydroxy-isovalerate. In the isomerase reaction, S2AL is rearranged via a Mg-dependent methyl migration to produce 3-hydroxy-3-methyl-2-ketobutyrate (HMKB). In the reductase reaction, this 2-ketoacid undergoes a metal-dependent reduction by NADPH to yield (R)-2,3-dihydroxy-isovalerate. The chain is Ketol-acid reductoisomerase (NADP(+)) from Staphylococcus aureus (strain USA300).